Here is a 75-residue protein sequence, read N- to C-terminus: Exodeoxyribonuclease 7 small subunit (75 aa).

The protein belongs to the XseB family. In terms of assembly, heterooligomer composed of large and small subunits.

The protein localises to the cytoplasm. The enzyme catalyses Exonucleolytic cleavage in either 5'- to 3'- or 3'- to 5'-direction to yield nucleoside 5'-phosphates.. Its function is as follows. Bidirectionally degrades single-stranded DNA into large acid-insoluble oligonucleotides, which are then degraded further into small acid-soluble oligonucleotides. This chain is Exodeoxyribonuclease 7 small subunit, found in Listeria welshimeri serovar 6b (strain ATCC 35897 / DSM 20650 / CCUG 15529 / CIP 8149 / NCTC 11857 / SLCC 5334 / V8).